The primary structure comprises 415 residues: SNF1 protein kinase subunit beta-2 (415 aa).

Disordered stretches follow at residues 1–43 (MGTT…EMDA), 55–158 (KCSD…PSEI), and 249–276 (EKNP…SSIA). A lipid anchor (N-myristoyl glycine) is attached at Gly-2. A compositionally biased stretch (basic residues) spans 9-19 (AQKKQTTKKCR). A compositionally biased stretch (polar residues) spans 55–69 (KCSDSQDAGQPSREG). The residue at position 66 (Ser-66) is a Phosphoserine. 2 stretches are compositionally biased toward basic and acidic residues: residues 122-150 (PKQD…RAKE) and 249-264 (EKNP…EADS). Residues 154-335 (GPSEIKSSLM…LDRQQSNTDT (182 aa)) are kinase-interacting sequence (KIS); required for interaction with SNF1. Position 298 is a phosphoserine (Ser-298). The interval 336–415 (SWLTPPQLPP…QILYTPIESS (80 aa)) is association with SNF1 kinase complex (ASC) domain; required for interaction with SNF4.

It belongs to the 5'-AMP-activated protein kinase beta subunit family. As to quaternary structure, component of the SNF1 kinase complex, a heterotrimeric complex composed of the catalytic alpha subunit SNF1, one of the three related beta subunits SIP1, SIP2 or GAL83, and the regulatory gamma subunit SNF4. The beta subunit serves as a bridge between the catalytic and the regulatory subunit. Interacts (via KIS domain) with SNF1. Interacts (via ASC domain) with SNF4. Post-translationally, phosphorylated by SNF1 in vitro.

Its subcellular location is the cytoplasm. The protein localises to the cell membrane. In terms of biological role, beta subunit of the SNF1 kinase complex, which is required for transcriptional, metabolic, and developmental adaptations in response to glucose limitation. Has a structural role, mediating heterotrimer formation, and a regulatory role, defining carbon source-regulated subcellular location and substrate specificity of the SNF1 kinase complex. Involved in the regulation of aging. Acts as a negative regulator of nuclear SNF1 activity in young cells by sequestering its activating gamma subunit at the plasma membrane. This Saccharomyces cerevisiae (strain ATCC 204508 / S288c) (Baker's yeast) protein is SNF1 protein kinase subunit beta-2 (SIP2).